Here is a 768-residue protein sequence, read N- to C-terminus: Vitamin B12-dependent ribonucleoside-diphosphate reductase (768 aa).

Residues 3-97 form the ATP-cone domain; sequence KEVVKRDGTV…LYREKRRAIR (95 aa). Substrate-binding positions include Ser-234, 249–250, Gly-278, 432–436, and 579–583; these read AC, NPCGE, and PTGTI. Cys-250 and Cys-445 are disulfide-bonded. Asn-432 functions as the Proton acceptor in the catalytic mechanism. Cys-434 serves as the catalytic Cysteine radical intermediate. The active-site Proton acceptor is the Glu-436.

This sequence belongs to the ribonucleoside diphosphate reductase class-2 family. As to quaternary structure, monomer. Adenosylcob(III)alamin serves as cofactor.

The catalysed reaction is a 2'-deoxyribonucleoside 5'-diphosphate + [thioredoxin]-disulfide + H2O = a ribonucleoside 5'-diphosphate + [thioredoxin]-dithiol. In terms of biological role, provides the precursors necessary for DNA synthesis. Catalyzes the biosynthesis of deoxyribonucleotides from the corresponding ribonucleotides. This Thermoplasma acidophilum (strain ATCC 25905 / DSM 1728 / JCM 9062 / NBRC 15155 / AMRC-C165) protein is Vitamin B12-dependent ribonucleoside-diphosphate reductase.